Reading from the N-terminus, the 169-residue chain is Cytochrome c oxidase subunit 4 isoform 1, mitochondrial (169 aa).

The transit peptide at 1–22 directs the protein to the mitochondrion; it reads MLATRVFSLIGRRAISTSVCVR. The Mitochondrial matrix portion of the chain corresponds to 23–98; the sequence is AHGSVVKSED…SFAEMNRSTN (76 aa). Lysine 29 is subject to N6-acetyllysine; alternate. Lysine 29 is modified (N6-succinyllysine; alternate). Lysine 53 is modified (N6-acetyllysine). 2 positions are modified to phosphoserine: serine 56 and serine 58. Lysine 60 bears the N6-acetyllysine; alternate mark. At lysine 60 the chain carries N6-succinyllysine; alternate. Lysine 67 bears the N6-acetyllysine mark. Residues 99–124 form a helical membrane-spanning segment; it reads EWKTVVGAAMFFIGFTALLLIWEKHY. Over 125 to 169 the chain is Mitochondrial intermembrane; it reads VYGPIPHTFEEEWVAKQTKRMLDMKVAPIQGFSAKWDYDKNEWKK.

This sequence belongs to the cytochrome c oxidase IV family. Component of the cytochrome c oxidase (complex IV, CIV), a multisubunit enzyme composed of 14 subunits. The complex is composed of a catalytic core of 3 subunits MT-CO1, MT-CO2 and MT-CO3, encoded in the mitochondrial DNA, and 11 supernumerary subunits COX4I1 (or COX4I2), COX5A, COX5B, COX6A2 (or COX6A1), COX6B1 (or COX6B2), COX6C, COX7A1 (or COX7A2), COX7B, COX7C, COX8B and NDUFA4, which are encoded in the nuclear genome. The complex exists as a monomer or a dimer and forms supercomplexes (SCs) in the inner mitochondrial membrane with NADH-ubiquinone oxidoreductase (complex I, CI) and ubiquinol-cytochrome c oxidoreductase (cytochrome b-c1 complex, complex III, CIII), resulting in different assemblies (supercomplex SCI(1)III(2)IV(1) and megacomplex MCI(2)III(2)IV(2)). Interacts with PHB2; the interaction decreases in absence of SPHK2. Interacts with AFG1L. Interacts with ABCB7; this interaction allows the regulation of cellular iron homeostasis and cellular reactive oxygen species (ROS) levels in cardiomyocytes. Interacts with FLVCR2; this interaction occurs in the absence of heme and is disrupted upon heme binding. Interacts with IRGC.

The protein localises to the mitochondrion inner membrane. The protein operates within energy metabolism; oxidative phosphorylation. In terms of biological role, component of the cytochrome c oxidase, the last enzyme in the mitochondrial electron transport chain which drives oxidative phosphorylation. The respiratory chain contains 3 multisubunit complexes succinate dehydrogenase (complex II, CII), ubiquinol-cytochrome c oxidoreductase (cytochrome b-c1 complex, complex III, CIII) and cytochrome c oxidase (complex IV, CIV), that cooperate to transfer electrons derived from NADH and succinate to molecular oxygen, creating an electrochemical gradient over the inner membrane that drives transmembrane transport and the ATP synthase. Cytochrome c oxidase is the component of the respiratory chain that catalyzes the reduction of oxygen to water. Electrons originating from reduced cytochrome c in the intermembrane space (IMS) are transferred via the dinuclear copper A center (CU(A)) of subunit 2 and heme A of subunit 1 to the active site in subunit 1, a binuclear center (BNC) formed by heme A3 and copper B (CU(B)). The BNC reduces molecular oxygen to 2 water molecules using 4 electrons from cytochrome c in the IMS and 4 protons from the mitochondrial matrix. The protein is Cytochrome c oxidase subunit 4 isoform 1, mitochondrial (COX4I1) of Bos taurus (Bovine).